The sequence spans 292 residues: Glutamyl-Q tRNA(Asp) synthetase (292 aa).

Residues 11–15 (RFAPS) and Glu47 each bind L-glutamate. A 'HIGH' region motif is present at residues 14–24 (PSPTGPLHFGS). Residues Cys103, Cys105, Tyr116, and Cys120 each contribute to the Zn(2+) site. Residues Tyr173 and Arg191 each contribute to the L-glutamate site. A 'KMSKS' region motif is present at residues 229 to 233 (KLSKQ). An ATP-binding site is contributed by Lys232.

This sequence belongs to the class-I aminoacyl-tRNA synthetase family. GluQ subfamily. Zn(2+) serves as cofactor.

In terms of biological role, catalyzes the tRNA-independent activation of glutamate in presence of ATP and the subsequent transfer of glutamate onto a tRNA(Asp). Glutamate is transferred on the 2-amino-5-(4,5-dihydroxy-2-cyclopenten-1-yl) moiety of the queuosine in the wobble position of the QUC anticodon. This Acinetobacter baylyi (strain ATCC 33305 / BD413 / ADP1) protein is Glutamyl-Q tRNA(Asp) synthetase.